The following is a 150-amino-acid chain: MAEEQAQPQLALERIYVKDMSLEVPGAGVFTKEWNPELDINLSSNAEKLDDDHYQVVLTVSVTAKNAEEAAFIAEVHQAGIFLLKDIPEDQIGQILGAYCPNVLFPYAREVISDIVTRGSFPQLLLAPVNFDQAFAQSQQQAQVDAEGNA.

This sequence belongs to the SecB family. In terms of assembly, homotetramer, a dimer of dimers. One homotetramer interacts with 1 SecA dimer.

It is found in the cytoplasm. Its function is as follows. One of the proteins required for the normal export of preproteins out of the cell cytoplasm. It is a molecular chaperone that binds to a subset of precursor proteins, maintaining them in a translocation-competent state. It also specifically binds to its receptor SecA. The sequence is that of Protein-export protein SecB from Psychrobacter cryohalolentis (strain ATCC BAA-1226 / DSM 17306 / VKM B-2378 / K5).